A 532-amino-acid chain; its full sequence is 3-hydroxy-3-methylglutaryl-coenzyme A reductase 1 (532 aa).

The chain crosses the membrane as a helical span at residues 63-83 (FATVVYLVSLFAHPDAPATTT). The tract at residues 77 to 117 (DAPATTTGDDDDGQGGSRRARPAAAEPAPMHGHGGGMMEAD) is linker. A disordered region spans residues 78–111 (APATTTGDDDDGQGGSRRARPAAAEPAPMHGHGG). Residues 98 to 107 (PAAAEPAPMH) are compositionally biased toward low complexity. Positions 118–532 (DEEIVAAVAS…SSKDVAKAAS (415 aa)) are catalytic. Glu-211 serves as the catalytic Charge relay system. Asn-275 carries N-linked (GlcNAc...) asparagine glycosylation. Active-site charge relay system residues include Lys-343 and Asp-419. His-517 functions as the Proton donor in the catalytic mechanism. Asn-521 carries N-linked (GlcNAc...) asparagine glycosylation.

The protein belongs to the HMG-CoA reductase family.

It localises to the endoplasmic reticulum membrane. The enzyme catalyses (R)-mevalonate + 2 NADP(+) + CoA = (3S)-3-hydroxy-3-methylglutaryl-CoA + 2 NADPH + 2 H(+). It participates in metabolic intermediate biosynthesis; (R)-mevalonate biosynthesis; (R)-mevalonate from acetyl-CoA: step 3/3. In terms of biological role, catalyzes the synthesis of mevalonate. The specific precursor of all isoprenoid compounds present in plants. The chain is 3-hydroxy-3-methylglutaryl-coenzyme A reductase 1 (HMG1) from Oryza sativa subsp. japonica (Rice).